The sequence spans 317 residues: tRNA dimethylallyltransferase (317 aa).

14-21 (GPTAVGKT) is an ATP binding site. Position 16 to 21 (16 to 21 (TAVGKT)) interacts with substrate. The interaction with substrate tRNA stretch occupies residues 39–42 (DSMQ).

It belongs to the IPP transferase family. In terms of assembly, monomer. Requires Mg(2+) as cofactor.

The enzyme catalyses adenosine(37) in tRNA + dimethylallyl diphosphate = N(6)-dimethylallyladenosine(37) in tRNA + diphosphate. In terms of biological role, catalyzes the transfer of a dimethylallyl group onto the adenine at position 37 in tRNAs that read codons beginning with uridine, leading to the formation of N6-(dimethylallyl)adenosine (i(6)A). The protein is tRNA dimethylallyltransferase of Bacillus cereus (strain ATCC 10987 / NRS 248).